We begin with the raw amino-acid sequence, 442 residues long: tRNA(Ile)-lysidine synthase (442 aa).

Residue Ser30–Ser35 participates in ATP binding.

The protein belongs to the tRNA(Ile)-lysidine synthase family.

Its subcellular location is the cytoplasm. It catalyses the reaction cytidine(34) in tRNA(Ile2) + L-lysine + ATP = lysidine(34) in tRNA(Ile2) + AMP + diphosphate + H(+). In terms of biological role, ligates lysine onto the cytidine present at position 34 of the AUA codon-specific tRNA(Ile) that contains the anticodon CAU, in an ATP-dependent manner. Cytidine is converted to lysidine, thus changing the amino acid specificity of the tRNA from methionine to isoleucine. The chain is tRNA(Ile)-lysidine synthase from Pseudomonas fluorescens (strain Pf0-1).